The chain runs to 208 residues: Outer-membrane lipoprotein carrier protein (208 aa).

The first 22 residues, 1 to 22, serve as a signal peptide directing secretion; sequence MKNLLCAVMLTSPLLYSTAVFA.

The protein belongs to the LolA family. As to quaternary structure, monomer.

The protein localises to the periplasm. Participates in the translocation of lipoproteins from the inner membrane to the outer membrane. Only forms a complex with a lipoprotein if the residue after the N-terminal Cys is not an aspartate (The Asp acts as a targeting signal to indicate that the lipoprotein should stay in the inner membrane). In Shewanella sp. (strain W3-18-1), this protein is Outer-membrane lipoprotein carrier protein.